We begin with the raw amino-acid sequence, 626 residues long: Fructose-1,6-bisphosphatase class 3 (626 aa).

This sequence belongs to the FBPase class 3 family. It depends on Mn(2+) as a cofactor.

It carries out the reaction beta-D-fructose 1,6-bisphosphate + H2O = beta-D-fructose 6-phosphate + phosphate. Its pathway is carbohydrate biosynthesis; gluconeogenesis. This chain is Fructose-1,6-bisphosphatase class 3, found in Enterococcus faecalis (strain ATCC 700802 / V583).